The chain runs to 564 residues: Probable beta-glucosidase btgE (564 aa).

An N-terminal signal peptide occupies residues 1-18 (MRGAFLATAAAIAGTAMA). Positions 285 to 304 (ATSSVAPSSSPSKPAAPSGA) are disordered. N404 is a glycosylation site (N-linked (GlcNAc...) asparagine). Residue E405 is the Proton donor of the active site. E501 (nucleophile) is an active-site residue.

It belongs to the glycosyl hydrolase 17 family.

Its subcellular location is the secreted. The protein resides in the cell wall. The catalysed reaction is Hydrolysis of terminal, non-reducing beta-D-glucosyl residues with release of beta-D-glucose.. Its pathway is glycan metabolism; cellulose degradation. In terms of biological role, beta-glucosidases are one of a number of cellulolytic enzymes involved in the degradation of cellulosic biomass. Catalyzes the last step releasing glucose from the inhibitory cellobiose. The chain is Probable beta-glucosidase btgE (btgE) from Aspergillus clavatus (strain ATCC 1007 / CBS 513.65 / DSM 816 / NCTC 3887 / NRRL 1 / QM 1276 / 107).